The chain runs to 382 residues: Probable dual-specificity RNA methyltransferase RlmN (382 aa).

Catalysis depends on E118, which acts as the Proton acceptor. A Radical SAM core domain is found at 124 to 370 (YDKRVTMCIS…TTVRDTRGSD (247 aa)). Residues C131 and C375 are joined by a disulfide bond. [4Fe-4S] cluster contacts are provided by C138, C142, and C145. Residues 196-197 (GE), S230, 253-255 (SLH), and N332 each bind S-adenosyl-L-methionine. C375 functions as the S-methylcysteine intermediate in the catalytic mechanism.

Belongs to the radical SAM superfamily. RlmN family. [4Fe-4S] cluster is required as a cofactor.

The protein localises to the cytoplasm. The enzyme catalyses adenosine(2503) in 23S rRNA + 2 reduced [2Fe-2S]-[ferredoxin] + 2 S-adenosyl-L-methionine = 2-methyladenosine(2503) in 23S rRNA + 5'-deoxyadenosine + L-methionine + 2 oxidized [2Fe-2S]-[ferredoxin] + S-adenosyl-L-homocysteine. The catalysed reaction is adenosine(37) in tRNA + 2 reduced [2Fe-2S]-[ferredoxin] + 2 S-adenosyl-L-methionine = 2-methyladenosine(37) in tRNA + 5'-deoxyadenosine + L-methionine + 2 oxidized [2Fe-2S]-[ferredoxin] + S-adenosyl-L-homocysteine. In terms of biological role, specifically methylates position 2 of adenine 2503 in 23S rRNA and position 2 of adenine 37 in tRNAs. This is Probable dual-specificity RNA methyltransferase RlmN from Kocuria rhizophila (strain ATCC 9341 / DSM 348 / NBRC 103217 / DC2201).